The sequence spans 278 residues: Malonyl-[acyl-carrier protein] O-methyltransferase (278 aa).

Belongs to the methyltransferase superfamily.

The enzyme catalyses malonyl-[ACP] + S-adenosyl-L-methionine = malonyl-[ACP] methyl ester + S-adenosyl-L-homocysteine. The protein operates within cofactor biosynthesis; biotin biosynthesis. In terms of biological role, converts the free carboxyl group of a malonyl-thioester to its methyl ester by transfer of a methyl group from S-adenosyl-L-methionine (SAM). It allows to synthesize pimeloyl-ACP via the fatty acid synthetic pathway. This is Malonyl-[acyl-carrier protein] O-methyltransferase from Brevibacillus brevis (strain 47 / JCM 6285 / NBRC 100599).